The chain runs to 500 residues: ATP synthase subunit alpha (500 aa).

Position 167-174 (167-174 (GDRQTGKT)) interacts with ATP.

It belongs to the ATPase alpha/beta chains family. As to quaternary structure, F-type ATPases have 2 components, CF(1) - the catalytic core - and CF(0) - the membrane proton channel. CF(1) has five subunits: alpha(3), beta(3), gamma(1), delta(1), epsilon(1). CF(0) has three main subunits: a(1), b(2) and c(9-12). The alpha and beta chains form an alternating ring which encloses part of the gamma chain. CF(1) is attached to CF(0) by a central stalk formed by the gamma and epsilon chains, while a peripheral stalk is formed by the delta and b chains.

The protein resides in the cell inner membrane. It carries out the reaction ATP + H2O + 4 H(+)(in) = ADP + phosphate + 5 H(+)(out). Produces ATP from ADP in the presence of a proton gradient across the membrane. The alpha chain is a regulatory subunit. The chain is ATP synthase subunit alpha from Wolinella succinogenes (strain ATCC 29543 / DSM 1740 / CCUG 13145 / JCM 31913 / LMG 7466 / NCTC 11488 / FDC 602W) (Vibrio succinogenes).